The sequence spans 118 residues: Ribosome-binding factor A (118 aa).

The protein belongs to the RbfA family. Monomer. Binds 30S ribosomal subunits, but not 50S ribosomal subunits or 70S ribosomes.

It is found in the cytoplasm. Its function is as follows. One of several proteins that assist in the late maturation steps of the functional core of the 30S ribosomal subunit. Associates with free 30S ribosomal subunits (but not with 30S subunits that are part of 70S ribosomes or polysomes). Required for efficient processing of 16S rRNA. May interact with the 5'-terminal helix region of 16S rRNA. The protein is Ribosome-binding factor A of Dehalococcoides mccartyi (strain ATCC BAA-2266 / KCTC 15142 / 195) (Dehalococcoides ethenogenes (strain 195)).